The sequence spans 78 residues: Beta-defensin 105 (78 aa).

Residues 1-27 form the signal peptide; it reads MALIRKTFYFLFAMFFILVQLPSGCQA. 3 disulfides stabilise this stretch: cysteine 43-cysteine 74, cysteine 53-cysteine 67, and cysteine 57-cysteine 73.

This sequence belongs to the beta-defensin family. As to expression, specifically expressed in testis.

It localises to the secreted. Its function is as follows. Has antibacterial activity. The chain is Beta-defensin 105 (DEFB105A) from Homo sapiens (Human).